Consider the following 182-residue polypeptide: Spermatophorin SP23 (182 aa).

The first 7 residues, 1–7 (MVASIAG), serve as a signal peptide directing secretion. Disordered stretches follow at residues 1-26 (MVASIAGEEEPAAEKSQQSPDHFQPY), 56-79 (FQTIAKPNEGPTDQPEANSANSIE), and 104-136 (IVVNQAPPPPPVIYQAPPPPPPPPIFQQAPPTI). Pro residues predominate over residues 109-128 (APPPPPVIYQAPPPPPPPPI).

In terms of tissue distribution, spermatophore.

It is found in the secreted. Functionally, structural protein of a layer within the wall of the spermatophore produced probably by cell type 4 of the bean-shaped gland (BAG). Fixation in the spermatophore seems to require covalent cross-linking of spermatophorins. This chain is Spermatophorin SP23 (SP23), found in Tenebrio molitor (Yellow mealworm beetle).